The following is a 227-amino-acid chain: MTTLFDILNTLNNNNNNNNNYAGCKRQHSINKRVDIIPSMDVTLTNDKLIIETELTGVSKNDIDINIKDSILIIQGEKKKSIIKHQQQQQHQQQQQQQQQQQQQQQQQQQQQQQQQQQQQQQLENSNKENDEPSIEEFEEDVKSKSELNKTTLNTTENKDEDKTTQNISKKFISERSFGNFKRYLNLSEILYQLDLNSINTQFENGLLTITIKKKFDSSNTIKININ.

The 197-residue stretch at 31 to 227 (NKRVDIIPSM…SSNTIKININ (197 aa)) folds into the sHSP domain. Positions 119–164 (QQQQLENSNKENDEPSIEEFEEDVKSKSELNKTTLNTTENKDEDKT) are disordered.

Belongs to the small heat shock protein (HSP20) family.

The sequence is that of Small heat shock protein hspG3 (hspG3) from Dictyostelium discoideum (Social amoeba).